Consider the following 152-residue polypeptide: Transcription elongation factor Spt5 (152 aa).

In terms of domain architecture, KOW spans 99 to 128 (PGDVVEVISGPFRGTQAQVIRVEEAKGEVV).

The protein belongs to the archaeal Spt5 family. Heterodimer composed of Spt4 and Spt5. Interacts with RNA polymerase (RNAP).

Its function is as follows. Stimulates transcription elongation. This Saccharolobus solfataricus (strain ATCC 35092 / DSM 1617 / JCM 11322 / P2) (Sulfolobus solfataricus) protein is Transcription elongation factor Spt5.